The chain runs to 141 residues: Extracellular globin-1 (141 aa).

The Globin domain maps to 1-141 (DCNTLKRFKV…YAVIAAGIKP (141 aa)). The cysteines at positions 2 and 131 are disulfide-linked. H94 lines the heme b pocket.

Belongs to the globin family. As to quaternary structure, the giant hemoglobins of worms are formed of a monomeric subunit and a disulfide-bonded trimer. This subunit is monomeric.

The protein resides in the secreted. The protein is Extracellular globin-1 of Metaphire sieboldi (Earthworm).